We begin with the raw amino-acid sequence, 449 residues long: Glutamyl-tRNA reductase (449 aa).

Residues 58-61 (TCNR), Ser-121, 126-128 (ETQ), and Gln-132 contribute to the substrate site. Cys-59 functions as the Nucleophile in the catalytic mechanism. 203-208 (GLGEMA) lines the NADP(+) pocket.

This sequence belongs to the glutamyl-tRNA reductase family. Homodimer.

It catalyses the reaction (S)-4-amino-5-oxopentanoate + tRNA(Glu) + NADP(+) = L-glutamyl-tRNA(Glu) + NADPH + H(+). The protein operates within porphyrin-containing compound metabolism; protoporphyrin-IX biosynthesis; 5-aminolevulinate from L-glutamyl-tRNA(Glu): step 1/2. Its function is as follows. Catalyzes the NADPH-dependent reduction of glutamyl-tRNA(Glu) to glutamate 1-semialdehyde (GSA). The sequence is that of Glutamyl-tRNA reductase from Helicobacter pylori (strain P12).